The primary structure comprises 322 residues: Eukaryotic translation initiation factor 3 subunit I (322 aa).

WD repeat units follow at residues 4 to 43 (GHERSITQIKYNREGDLLFSCSKDQKPNVWYSLNGERLGT), 46 to 85 (GHQGAVWCLDVDWESRKLITGAGDMTTKIWDVEYGTIIAS), 141 to 180 (MTESKITSMLWGPLDETIITGHDNGNIAIWDIRKGQKVVD), 184 to 223 (DHTAGINDMQLSKDGTMFVTASKDTTAKLFDSESLMCLKT), and 281 to 322 (GHFG…NIFE).

The protein belongs to the eIF-3 subunit I family. In terms of assembly, component of the eukaryotic translation initiation factor 3 (eIF-3) complex. The eIF-3 complex interacts with pix.

It localises to the cytoplasm. In terms of biological role, component of the eukaryotic translation initiation factor 3 (eIF-3) complex, which is involved in protein synthesis of a specialized repertoire of mRNAs and, together with other initiation factors, stimulates binding of mRNA and methionyl-tRNAi to the 40S ribosome. The eIF-3 complex specifically targets and initiates translation of a subset of mRNAs involved in cell proliferation. This chain is Eukaryotic translation initiation factor 3 subunit I, found in Drosophila ananassae (Fruit fly).